The sequence spans 206 residues: Peptidyl-tRNA hydrolase (206 aa).

Residue Tyr19 coordinates tRNA. The Proton acceptor role is filled by His24. TRNA contacts are provided by Tyr70, Asn72, and Asn118.

The protein belongs to the PTH family. Monomer.

Its subcellular location is the cytoplasm. The enzyme catalyses an N-acyl-L-alpha-aminoacyl-tRNA + H2O = an N-acyl-L-amino acid + a tRNA + H(+). Functionally, hydrolyzes ribosome-free peptidyl-tRNAs (with 1 or more amino acids incorporated), which drop off the ribosome during protein synthesis, or as a result of ribosome stalling. Its function is as follows. Catalyzes the release of premature peptidyl moieties from peptidyl-tRNA molecules trapped in stalled 50S ribosomal subunits, and thus maintains levels of free tRNAs and 50S ribosomes. The protein is Peptidyl-tRNA hydrolase of Prochlorococcus marinus (strain MIT 9313).